The sequence spans 514 residues: 3-octaprenyl-4-hydroxybenzoate carboxy-lyase (514 aa).

Asn-177 serves as a coordination point for Mn(2+). Residues 180 to 182 (IYR), 194 to 196 (RWL), and 199 to 200 (RG) each bind prenylated FMN. Glu-243 contributes to the Mn(2+) binding site. The active-site Proton donor is Asp-314.

This sequence belongs to the UbiD family. As to quaternary structure, homohexamer. Requires prenylated FMN as cofactor. The cofactor is Mn(2+).

Its subcellular location is the cell membrane. The catalysed reaction is a 4-hydroxy-3-(all-trans-polyprenyl)benzoate + H(+) = a 2-(all-trans-polyprenyl)phenol + CO2. It participates in cofactor biosynthesis; ubiquinone biosynthesis. In terms of biological role, catalyzes the decarboxylation of 3-octaprenyl-4-hydroxy benzoate to 2-octaprenylphenol, an intermediate step in ubiquinone biosynthesis. In Bordetella pertussis (strain Tohama I / ATCC BAA-589 / NCTC 13251), this protein is 3-octaprenyl-4-hydroxybenzoate carboxy-lyase.